Here is a 321-residue protein sequence, read N- to C-terminus: MSKPIQMEKGVKYRDADKMALIPVKNMPTEQKEVLRKPDWMKIKLPADSQRIQDIKSAMRKNNLHSVCEEASCPNLAECFNHGTATFMILGAICTRRCPFCDVAHGRPLPPEAEEPTKLAKTIADMKLKYVVITSVDRDDLRDGGAKHFADCNREIRAQSPHIRIETLVPDFRGRMDVALEALKDNPPDVFNHNLETAPRLYRKVRPGANYQWSLDLLKKFKEQHPDVPTKSGLMMGLGETKEEIVEVLKDLRAHGVTMLTLGQYLAPSRHHLPVERYVPPAEFDELKEIALELGFTHAACGPFVRSSYHADMQAQGLEVK.

Cys-68, Cys-73, Cys-79, Cys-94, Cys-98, Cys-101, and Ser-308 together coordinate [4Fe-4S] cluster. The Radical SAM core domain maps to 80-297 (FNHGTATFMI…KEIALELGFT (218 aa)).

This sequence belongs to the radical SAM superfamily. Lipoyl synthase family. [4Fe-4S] cluster is required as a cofactor.

Its subcellular location is the cytoplasm. It carries out the reaction [[Fe-S] cluster scaffold protein carrying a second [4Fe-4S](2+) cluster] + N(6)-octanoyl-L-lysyl-[protein] + 2 oxidized [2Fe-2S]-[ferredoxin] + 2 S-adenosyl-L-methionine + 4 H(+) = [[Fe-S] cluster scaffold protein] + N(6)-[(R)-dihydrolipoyl]-L-lysyl-[protein] + 4 Fe(3+) + 2 hydrogen sulfide + 2 5'-deoxyadenosine + 2 L-methionine + 2 reduced [2Fe-2S]-[ferredoxin]. It participates in protein modification; protein lipoylation via endogenous pathway; protein N(6)-(lipoyl)lysine from octanoyl-[acyl-carrier-protein]: step 2/2. Functionally, catalyzes the radical-mediated insertion of two sulfur atoms into the C-6 and C-8 positions of the octanoyl moiety bound to the lipoyl domains of lipoate-dependent enzymes, thereby converting the octanoylated domains into lipoylated derivatives. This Vibrio vulnificus (strain CMCP6) protein is Lipoyl synthase.